Reading from the N-terminus, the 40-residue chain is Photosystem II reaction center protein Psb30 (40 aa).

Residues 12–32 (VIFQLTSVALIIIAGPAVIFV) form a helical membrane-spanning segment.

The protein belongs to the Psb30/Ycf12 family. In terms of assembly, PSII is composed of 1 copy each of membrane proteins PsbA, PsbB, PsbC, PsbD, PsbE, PsbF, PsbH, PsbI, PsbJ, PsbK, PsbL, PsbM, PsbT, PsbX, PsbY, PsbZ, Psb30/Ycf12, peripheral proteins PsbO, CyanoQ (PsbQ), PsbU, PsbV and a large number of cofactors. It forms dimeric complexes.

Its subcellular location is the cellular thylakoid membrane. A core subunit of photosystem II (PSII), probably helps stabilize the reaction center. This chain is Photosystem II reaction center protein Psb30, found in Nostoc sp. (strain PCC 7120 / SAG 25.82 / UTEX 2576).